A 351-amino-acid polypeptide reads, in one-letter code: Histidine protein kinase SaeS (351 aa).

The next 2 membrane-spanning stretches (helical) occupy residues 9-29 (IIIG…IAYI) and 40-60 (TLTL…SIFI). Residues 61–114 (NPLIQKIKQFNIKTKQFANGNYASNDKTFNSPKEIYELNQSFNKMASEITQQMN) enclose the HAMP domain. Residues 129–348 (NLAHDLKTPL…TMTVTLHKLD (220 aa)) enclose the Histidine kinase domain. The residue at position 132 (histidine 132) is a Phosphohistidine; by autocatalysis.

In terms of processing, autophosphorylated.

The protein resides in the cell membrane. It catalyses the reaction ATP + protein L-histidine = ADP + protein N-phospho-L-histidine.. In terms of biological role, member of the two-component regulatory system SaeR/SaeS involved in the regulation of staphylococcal virulence factors in a strain-dependent fashion. Probably functions as a membrane-associated protein kinase that upon sensing the appropriate signal, autophosphorylates and in turn activates the cytosolic response regulator SaeR. This chain is Histidine protein kinase SaeS (saeS), found in Staphylococcus aureus (strain MRSA252).